Consider the following 560-residue polypeptide: Light-independent protochlorophyllide reductase subunit N (560 aa).

Residues cysteine 24, cysteine 49, and cysteine 109 each contribute to the [4Fe-4S] cluster site. Residues 173-182 are compositionally biased toward low complexity; it reads NSLFNQSSNS. The interval 173 to 210 is disordered; it reads NSLFNQSSNSPENLKTLNTKKDTFQNSTENSKTFSAEK. Polar residues predominate over residues 196 to 206; that stretch reads FQNSTENSKTF.

It belongs to the BchN/ChlN family. As to quaternary structure, protochlorophyllide reductase is composed of three subunits; ChlL, ChlN and ChlB. Forms a heterotetramer of two ChlB and two ChlN subunits. [4Fe-4S] cluster serves as cofactor.

The protein resides in the plastid. It localises to the chloroplast. It carries out the reaction chlorophyllide a + oxidized 2[4Fe-4S]-[ferredoxin] + 2 ADP + 2 phosphate = protochlorophyllide a + reduced 2[4Fe-4S]-[ferredoxin] + 2 ATP + 2 H2O. It participates in porphyrin-containing compound metabolism; chlorophyll biosynthesis (light-independent). In terms of biological role, component of the dark-operative protochlorophyllide reductase (DPOR) that uses Mg-ATP and reduced ferredoxin to reduce ring D of protochlorophyllide (Pchlide) to form chlorophyllide a (Chlide). This reaction is light-independent. The NB-protein (ChlN-ChlB) is the catalytic component of the complex. This chain is Light-independent protochlorophyllide reductase subunit N, found in Tetradesmus obliquus (Green alga).